Consider the following 100-residue polypeptide: Small ribosomal subunit protein eS24 (100 aa).

It belongs to the eukaryotic ribosomal protein eS24 family.

This Methanothermobacter thermautotrophicus (strain ATCC 29096 / DSM 1053 / JCM 10044 / NBRC 100330 / Delta H) (Methanobacterium thermoautotrophicum) protein is Small ribosomal subunit protein eS24.